A 172-amino-acid polypeptide reads, in one-letter code: Translation initiation factor IF-3 (172 aa).

This sequence belongs to the IF-3 family. Monomer.

It localises to the cytoplasm. Its function is as follows. IF-3 binds to the 30S ribosomal subunit and shifts the equilibrium between 70S ribosomes and their 50S and 30S subunits in favor of the free subunits, thus enhancing the availability of 30S subunits on which protein synthesis initiation begins. This is Translation initiation factor IF-3 from Haemophilus influenzae (strain ATCC 51907 / DSM 11121 / KW20 / Rd).